We begin with the raw amino-acid sequence, 62 residues long: MPKCDICGKGSIRGFQYSHSNRRTIRRWKPNIRKVRAIVDGTHVTLNVCAKCLKAGKVQRAL.

Belongs to the bacterial ribosomal protein bL28 family.

The protein is Large ribosomal subunit protein bL28 of Caldanaerobacter subterraneus subsp. tengcongensis (strain DSM 15242 / JCM 11007 / NBRC 100824 / MB4) (Thermoanaerobacter tengcongensis).